Reading from the N-terminus, the 69-residue chain is DNA-directed RNA polymerase subunit omega (69 aa).

The protein belongs to the RNA polymerase subunit omega family. As to quaternary structure, the RNAP catalytic core consists of 2 alpha, 1 beta, 1 beta' and 1 omega subunit. When a sigma factor is associated with the core the holoenzyme is formed, which can initiate transcription.

It carries out the reaction RNA(n) + a ribonucleoside 5'-triphosphate = RNA(n+1) + diphosphate. Functionally, promotes RNA polymerase assembly. Latches the N- and C-terminal regions of the beta' subunit thereby facilitating its interaction with the beta and alpha subunits. In Heliobacterium modesticaldum (strain ATCC 51547 / Ice1), this protein is DNA-directed RNA polymerase subunit omega.